Here is a 477-residue protein sequence, read N- to C-terminus: V-type proton ATPase subunit B (477 aa).

Arginine 365 contacts ATP.

This sequence belongs to the ATPase alpha/beta chains family. As to quaternary structure, V-ATPase is a heteromultimeric enzyme composed of a peripheral catalytic V1 complex (components A to H) attached to an integral membrane V0 proton pore complex (components: a, c, c', c'', d, e, f and VOA1).

The protein resides in the vacuole membrane. Non-catalytic subunit of the V1 complex of vacuolar(H+)-ATPase (V-ATPase), a multisubunit enzyme composed of a peripheral complex (V1) that hydrolyzes ATP and a membrane integral complex (V0) that translocates protons. V-ATPase is responsible for acidifying and maintaining the pH of intracellular compartments. The protein is V-type proton ATPase subunit B of Encephalitozoon cuniculi (strain GB-M1) (Microsporidian parasite).